A 910-amino-acid polypeptide reads, in one-letter code: MLEKTYDAAATEPKIAERWEEAGAFKAGAGAKPGADPFAVVIPPPNVTGSLHMGHALNNTIQDIMVRFERMRGKNVLWQPGMDHAGIATQMVVERQLAERKEPNRHAMGREKFIERIWQWKAESGGMISNQLRRLGASCDWSRERFTMDEGLSRAVLEVFVTLYKQGLIYRDKRLVNWDPKLLTAISDIEVESREIKGHLWHFRYPLENVPFDPENPHTYIIVATTRPETMLGDTGVAVNPKDERYHALVGNDVILPLVGRHIPIVADDYADPEAGSGTVKITPAHDFNDFEVGKRNNLRAINILTPEAAITLKDNVDFLEDLELTAELKALIVELDGMDRFAARKRIVELMDERGYLEKIDDHTHAVPHGDRGGVPIEPYLTDQWYVNAGELAKPAMAAVRDGRTQIVPKNWEKTYFDWMENIQPWCVSRQLWWGHQIPAWYGPDSHCFVEKSEAEAKAAARAHYGEDVALERDTDVLDTWFSSALWPFSTLGWPDKTPELATYYPTSVLVTGFDILFFWVARMMMMGLHFMEEIPFHTVYLHALVRDKHGAKMSKSKGNVIDPLELMDEYGADALRFTLAIMAAQGRDVKLDPARIAGYRNFGTKLWNATRFAQMNGVKLAPDFRPENAKLAVNRWILTELTRATRAVTEGIATYRFNEAAGAAYRFVWNQFCDWYLEFLKPIFMGDDEAAKAEAQATAAYCLDQVYKLLHPFMPFMTEELWSLTASEGKKRDTVLALAEWPELSFEDEDAAADINWLVDLVTGIRSVRAEMNVPAGAIAPVVVLDANKVTVDRFARHDAAIKRLARVERISFEQQAPKGAAQMLLGEATICIPLGSLIDLQAEAARLAKEAGKIAAEMDRIEKKLANEKFVANAREEVVEAERERLLELKEAAQRVATAESRIRDAS.

A 'HIGH' region motif is present at residues 45 to 55 (PNVTGSLHMGH). A 'KMSKS' region motif is present at residues 554–558 (KMSKS). Lys-557 serves as a coordination point for ATP. The stretch at 842–910 (DLQAEAARLA…TAESRIRDAS (69 aa)) forms a coiled coil.

It belongs to the class-I aminoacyl-tRNA synthetase family. ValS type 1 subfamily. Monomer.

It localises to the cytoplasm. The enzyme catalyses tRNA(Val) + L-valine + ATP = L-valyl-tRNA(Val) + AMP + diphosphate. Functionally, catalyzes the attachment of valine to tRNA(Val). As ValRS can inadvertently accommodate and process structurally similar amino acids such as threonine, to avoid such errors, it has a 'posttransfer' editing activity that hydrolyzes mischarged Thr-tRNA(Val) in a tRNA-dependent manner. In Brucella melitensis biotype 1 (strain ATCC 23456 / CCUG 17765 / NCTC 10094 / 16M), this protein is Valine--tRNA ligase.